A 482-amino-acid chain; its full sequence is UDP-N-acetylmuramate--L-alanine ligase (482 aa).

The interval 1 to 26 (MPQLPMTDSAPLPTPAPSSPAQPSAQ) is disordered. 140–146 (GTHGKTT) provides a ligand contact to ATP.

The protein belongs to the MurCDEF family.

The protein resides in the cytoplasm. The catalysed reaction is UDP-N-acetyl-alpha-D-muramate + L-alanine + ATP = UDP-N-acetyl-alpha-D-muramoyl-L-alanine + ADP + phosphate + H(+). It participates in cell wall biogenesis; peptidoglycan biosynthesis. Functionally, cell wall formation. This Deinococcus radiodurans (strain ATCC 13939 / DSM 20539 / JCM 16871 / CCUG 27074 / LMG 4051 / NBRC 15346 / NCIMB 9279 / VKM B-1422 / R1) protein is UDP-N-acetylmuramate--L-alanine ligase.